Consider the following 105-residue polypeptide: Integration host factor subunit alpha (105 aa).

The protein belongs to the bacterial histone-like protein family. Heterodimer of an alpha and a beta chain.

Functionally, this protein is one of the two subunits of integration host factor, a specific DNA-binding protein that functions in genetic recombination as well as in transcriptional and translational control. The chain is Integration host factor subunit alpha from Azorhizobium caulinodans (strain ATCC 43989 / DSM 5975 / JCM 20966 / LMG 6465 / NBRC 14845 / NCIMB 13405 / ORS 571).